Consider the following 124-residue polypeptide: Small ribosomal subunit protein uS13 (124 aa).

The interval 98–124 (VRGQRTKTNARTRKGPKRTIAGKKKAR) is disordered.

The protein belongs to the universal ribosomal protein uS13 family. In terms of assembly, part of the 30S ribosomal subunit. Forms a loose heterodimer with protein S19. Forms two bridges to the 50S subunit in the 70S ribosome.

Functionally, located at the top of the head of the 30S subunit, it contacts several helices of the 16S rRNA. In the 70S ribosome it contacts the 23S rRNA (bridge B1a) and protein L5 of the 50S subunit (bridge B1b), connecting the 2 subunits; these bridges are implicated in subunit movement. Contacts the tRNAs in the A and P-sites. The chain is Small ribosomal subunit protein uS13 from Mycobacterium leprae (strain Br4923).